A 2710-amino-acid polypeptide reads, in one-letter code: Serine/threonine-protein kinase ATR (2710 aa).

The FAT domain maps to T1647–S2257. The PI3K/PI4K catalytic domain occupies I2368–L2680. Residues I2374–K2380 form a G-loop region. Residues G2545–N2553 form a catalytic loop region. The segment at H2565 to T2589 is activation loop. Residues L2678–F2710 enclose the FATC domain.

The protein belongs to the PI3/PI4-kinase family. ATM subfamily.

The protein localises to the nucleus. The catalysed reaction is L-seryl-[protein] + ATP = O-phospho-L-seryl-[protein] + ADP + H(+). The enzyme catalyses L-threonyl-[protein] + ATP = O-phospho-L-threonyl-[protein] + ADP + H(+). Probable serine/threonine kinase. Seems to play a central role in cell-cycle regulation by transmitting DNA damage signals to downstream effectors of cell-cycle progression. May recognize the substrate consensus sequence [ST]-Q and phosphorylate histone variant H2AX to form H2AXS139ph at sites of DNA damage, thereby regulating DNA damage response mechanism. This Oryza sativa subsp. indica (Rice) protein is Serine/threonine-protein kinase ATR.